We begin with the raw amino-acid sequence, 85 residues long: Toxin AahP1005 (85 aa).

The N-terminal stretch at 1-19 is a signal peptide; the sequence is MNYLVMISLALLFMTGVES. The region spanning 21 to 83 is the LCN-type CS-alpha/beta domain; it reads KDGYIVDDKN…VSTKKKGGCN (63 aa). 4 disulfide bridges follow: Cys-31/Cys-82, Cys-35/Cys-55, Cys-41/Cys-65, and Cys-45/Cys-67. Position 83 is an asparagine amide (Asn-83).

This sequence belongs to the long (4 C-C) scorpion toxin superfamily. Sodium channel inhibitor family. Alpha subfamily. Expressed by the venom gland.

Its subcellular location is the secreted. Functionally, alpha toxins bind voltage-independently at site-3 of sodium channels (Nav) and inhibit the inactivation of the activated channels, thereby blocking neuronal transmission. In Androctonus australis (Sahara scorpion), this protein is Toxin AahP1005.